We begin with the raw amino-acid sequence, 85 residues long: Small ribosomal subunit protein uS17 (85 aa).

It belongs to the universal ribosomal protein uS17 family. Part of the 30S ribosomal subunit.

One of the primary rRNA binding proteins, it binds specifically to the 5'-end of 16S ribosomal RNA. This is Small ribosomal subunit protein uS17 from Ruminiclostridium cellulolyticum (strain ATCC 35319 / DSM 5812 / JCM 6584 / H10) (Clostridium cellulolyticum).